The following is a 206-amino-acid chain: Sortase A (206 aa).

The Cytoplasmic portion of the chain corresponds to 1–6 (MKKWTN). A helical transmembrane segment spans residues 7–24 (RLMTIAGVVLILVAAYLF). Over 25–206 (AKPHIDNYLH…RKIFVATEVK (182 aa)) the chain is Extracellular. The disordered stretch occupies residues 49–69 (VKEQASKDKKQQAKPQIPKDK). Glu105, Glu108, Asp112, and Asn114 together coordinate Ca(2+). His120 serves as the catalytic Proton donor/acceptor. A Ca(2+)-binding site is contributed by Glu171. Cys184 serves as the catalytic Acyl-thioester intermediate.

This sequence belongs to the bacterial sortase family. Class A subfamily. As to quaternary structure, monomer and homodimer; in equilibrium.

The protein localises to the cell membrane. It carries out the reaction The enzyme catalyzes a cell wall sorting reaction in which a surface protein with a sorting signal containing a LPXTG motif is cleaved between the Thr and Gly residue. The resulting threonine carboxyl end of the protein is covalently attached to a pentaglycine cross-bridge of peptidoglycan.. Sortase activity is regulated by monomer-homodimer equilibrium. Mutant cells with monomeric SrtA display more adhesive proteins on the cell surface and are more invasive than wild-type cells, which have majority of SrtA in dimeric form. Dimerization may suppress the enzymatic activity on cell membranes. Stimulated by calcium ions, which promote substrate binding. Calcium ions bind to SrtA and modulate both the structure and dynamics of a large active site loop. Can also be stimulated, to a lesser extent, by Mg(2+) and Mn(2+). Inhibited by sulfhydryl-modifying reagents. In terms of biological role, transpeptidase that anchors surface proteins to the cell wall. Recognizes and modifies its substrate by proteolytic cleavage of a C-terminal sorting signal. Following cleavage, a covalent intermediate is formed via a thioester bond between the sortase and its substrate, which is then transferred and covalently attached to the cell wall. This sortase recognizes a Leu-Pro-x-Thr-Gly (LPXTG) motif, which is cleaved by the sortase between the threonine and glycine residues. Utilizes lipid II as the peptidoglycan substrate for the sorting reaction. Responsible for the display of important virulence factors. Important for interactions with the host and host colonization during infection. The chain is Sortase A from Staphylococcus aureus (strain NCTC 8325 / PS 47).